A 701-amino-acid chain; its full sequence is CRS2-associated factor 1, chloroplastic (701 aa).

The transit peptide at 1–77 (MATSHLTSRS…ENGEPAAGVR (77 aa)) directs the protein to the chloroplast. 2 CRM domains span residues 183 to 279 (EPLT…TRPI) and 301 to 397 (DGLT…LPPL). Residues 581 to 603 (GILLLFKQAIDSGMALVLNENEF) form a CRS2 binding region.

Interacts with CRS2 and RNA. Part of large ribonucleo-protein complexes that include group IIB introns, CRS2 and CAF1.

It localises to the plastid. The protein localises to the chloroplast stroma. Its function is as follows. Required for the splicing of group IIB introns in chloroplasts. Forms splicing particles with CRS2. Interacts with RNA and confers intron specificity of the splicing particles. The polypeptide is CRS2-associated factor 1, chloroplastic (Oryza sativa subsp. japonica (Rice)).